Here is an 81-residue protein sequence, read N- to C-terminus: UPF0180 protein BLi01634/BL05144 (81 aa).

This sequence belongs to the UPF0180 family.

The polypeptide is UPF0180 protein BLi01634/BL05144 (Bacillus licheniformis (strain ATCC 14580 / DSM 13 / JCM 2505 / CCUG 7422 / NBRC 12200 / NCIMB 9375 / NCTC 10341 / NRRL NRS-1264 / Gibson 46)).